The following is a 90-amino-acid chain: Co-chaperonin GroES (90 aa).

This sequence belongs to the GroES chaperonin family. In terms of assembly, heptamer of 7 subunits arranged in a ring. Interacts with the chaperonin GroEL.

It is found in the cytoplasm. Together with the chaperonin GroEL, plays an essential role in assisting protein folding. The GroEL-GroES system forms a nano-cage that allows encapsulation of the non-native substrate proteins and provides a physical environment optimized to promote and accelerate protein folding. GroES binds to the apical surface of the GroEL ring, thereby capping the opening of the GroEL channel. The sequence is that of Co-chaperonin GroES from Fusobacterium nucleatum subsp. nucleatum (strain ATCC 25586 / DSM 15643 / BCRC 10681 / CIP 101130 / JCM 8532 / KCTC 2640 / LMG 13131 / VPI 4355).